Here is a 675-residue protein sequence, read N- to C-terminus: Protein kintoun (675 aa).

Disordered stretches follow at residues 98–131, 265–293, 310–340, and 509–659; these read ASKK…KQGA, AGEG…TAPP, EGGA…AVAK, and EAAH…AAPT. Over residues 102 to 113 the composition is skewed to basic and acidic residues; it reads QQQEQEKQEKEQ. Positions 279–293 are enriched in low complexity; sequence VPGVPDLPGAKTAPP. Over residues 529–543 the composition is skewed to low complexity; that stretch reads AAAASSGAAPAPAAA. Acidic residues predominate over residues 544–553; it reads SEEEEEEDKE. The segment covering 564–577 has biased composition (low complexity); the sequence is DPAAAAAAAGASSG. Over residues 579–596 the composition is skewed to basic and acidic residues; it reads ELTENERKWRELHARQQQ. Low complexity-rich tracts occupy residues 604–617 and 628–659; these read AAEA…AAAE and VAQG…AAPT.

This sequence belongs to the PIH1 family. Kintoun subfamily.

Its subcellular location is the cytoplasm. Its function is as follows. Required for cytoplasmic pre-assembly of axonemal dyneins, thereby playing a central role in motility in cilia and flagella. Involved in pre-assembly of dynein arm complexes in the cytoplasm before intraflagellar transport loads them for the ciliary compartment. This is Protein kintoun (pf13) from Chlamydomonas reinhardtii (Chlamydomonas smithii).